Consider the following 139-residue polypeptide: D-ribose pyranase (139 aa).

The active-site Proton donor is the His20. Substrate is bound by residues Asp28, His106, and 128 to 130; that span reads YAN.

Belongs to the RbsD / FucU family. RbsD subfamily. Homodecamer.

It is found in the cytoplasm. It catalyses the reaction beta-D-ribopyranose = beta-D-ribofuranose. Its pathway is carbohydrate metabolism; D-ribose degradation; D-ribose 5-phosphate from beta-D-ribopyranose: step 1/2. Its function is as follows. Catalyzes the interconversion of beta-pyran and beta-furan forms of D-ribose. The polypeptide is D-ribose pyranase (Shewanella halifaxensis (strain HAW-EB4)).